Consider the following 347-residue polypeptide: NADH-ubiquinone oxidoreductase chain 2 (347 aa).

A run of 10 helical transmembrane segments spans residues 3–23, 25–45, 59–79, 93–115, 149–169, 178–198, 200–220, 242–262, 274–294, and 323–343; these read PPILIIILSTVISGTMIVLTS, HWLLTWIGFEMNMLAIIPILM, YFLTQATASMLLMMGIIINLL, MASTMMTIAMTMKLGLAPFHFWV, INTNLLMTMATMSVLIGGWGG, ILAYSSIAHMGWMVAIMTYNP, VMILNLMMYIMMTLTSFMLFI, SFILVLMLSLGGLPPLSGFIP, EMIILPTLLAITALLNLYFYM, and MALLPPLIIISTMLLPLTPMM.

Belongs to the complex I subunit 2 family. Core subunit of respiratory chain NADH dehydrogenase (Complex I) which is composed of 45 different subunits. Interacts with TMEM242.

It localises to the mitochondrion inner membrane. The enzyme catalyses a ubiquinone + NADH + 5 H(+)(in) = a ubiquinol + NAD(+) + 4 H(+)(out). Core subunit of the mitochondrial membrane respiratory chain NADH dehydrogenase (Complex I) which catalyzes electron transfer from NADH through the respiratory chain, using ubiquinone as an electron acceptor. Essential for the catalytic activity and assembly of complex I. This chain is NADH-ubiquinone oxidoreductase chain 2, found in Nandinia binotata (African palm civet).